The chain runs to 294 residues: Nucleotide-binding protein Smlt1108 (294 aa).

16–23 lines the ATP pocket; the sequence is GLSGSGKS. 69–72 is a binding site for GTP; sequence DVRG.

This sequence belongs to the RapZ-like family.

Displays ATPase and GTPase activities. This is Nucleotide-binding protein Smlt1108 from Stenotrophomonas maltophilia (strain K279a).